A 1187-amino-acid chain; its full sequence is DNA-directed RNA polymerase subunit beta (1187 aa).

The protein belongs to the RNA polymerase beta chain family. In terms of assembly, the RNAP catalytic core consists of 2 alpha, 1 beta, 1 beta' and 1 omega subunit. When a sigma factor is associated with the core the holoenzyme is formed, which can initiate transcription.

It catalyses the reaction RNA(n) + a ribonucleoside 5'-triphosphate = RNA(n+1) + diphosphate. Its function is as follows. DNA-dependent RNA polymerase catalyzes the transcription of DNA into RNA using the four ribonucleoside triphosphates as substrates. This chain is DNA-directed RNA polymerase subunit beta, found in Petrotoga mobilis (strain DSM 10674 / SJ95).